The chain runs to 372 residues: DNA double-strand break repair protein Mre11 (372 aa).

The Mn(2+) site is built by Asp8, His10, Asp49, and Asn84. The active-site Proton donor is His85. 3 residues coordinate Mn(2+): His161, His190, and His192.

This sequence belongs to the MRE11/RAD32 family. In terms of assembly, homodimer. Forms a heterotetramer composed of two Mre11 subunits and two Rad50 subunits. Mn(2+) is required as a cofactor.

Its activity is regulated as follows. Nuclease activity is regulated by Rad50. In terms of biological role, part of the Rad50/Mre11 complex, which is involved in the early steps of DNA double-strand break (DSB) repair. The complex may facilitate opening of the processed DNA ends to aid in the recruitment of HerA and NurA. Mre11 binds to DSB ends and has both double-stranded 3'-5' exonuclease activity and single-stranded endonuclease activity. This Methanococcus maripaludis (strain DSM 14266 / JCM 13030 / NBRC 101832 / S2 / LL) protein is DNA double-strand break repair protein Mre11.